We begin with the raw amino-acid sequence, 463 residues long: Mitochondrial dynamics protein MID51 (463 aa).

At 1–23 the chain is on the mitochondrial intermembrane side; sequence MAGAGERKGKKDDNGIGTAIDFV. The chain crosses the membrane as a helical span at residues 24–46; that stretch reads LSNARLVLGVGGAAMLGIATLAV. Topologically, residues 47–463 are cytoplasmic; it reads KRMYDRAISA…LSEPEVLLQT (417 aa). The segment at 49-195 is dimerization; it reads MYDRAISAPT…LSGSLYDDLQ (147 aa). A phosphoserine mark is found at serine 55, serine 59, serine 79, and serine 94. Positions 57–79 are disordered; it reads PTSPTRLSHSGKRSWEEPNWMGS. The disordered stretch occupies residues 104-123; sequence AFDTDTFCPPRPKPVARKGQ. An important for interaction with DNM1L region spans residues 160–169; the sequence is AAVDICAELR. 3 residues coordinate ADP: serine 187, serine 189, and histidine 201. Residues 234–243 are important for interaction with DNM1L; the sequence is RRENPEYFPR. ADP is bound by residues serine 340, arginine 342, and lysine 368.

The protein belongs to the MID49/MID51 family. Homodimer. Interacts with DNM1L.

The protein localises to the mitochondrion outer membrane. Mitochondrial outer membrane protein which regulates mitochondrial fission/fusion dynamics. Promotes the recruitment and association of the fission mediator dynamin-related protein 1 (DNM1L) to the mitochondrial surface independently of the mitochondrial fission FIS1 and MFF proteins. Regulates DNM1L GTPase activity and DNM1L oligomerization. Binds ADP and can also bind GDP, although with lower affinity. Does not bind CDP, UDP, ATP, AMP or GTP. Inhibits DNM1L GTPase activity in the absence of bound ADP. Requires ADP to stimulate DNM1L GTPase activity and the assembly of DNM1L into long, oligomeric tubules with a spiral pattern, as opposed to the ring-like DNM1L oligomers observed in the absence of bound ADP. Does not require ADP for its function in recruiting DNM1L. The sequence is that of Mitochondrial dynamics protein MID51 (MIEF1) from Pongo abelii (Sumatran orangutan).